The chain runs to 132 residues: MRHGHGLRKLNRTSEHRLAMLRNMMNSLIEHEVIKTTLPKAKELRRVVEPMITLAKEATVANRRLAFDRLRDRDSVVKLFNDLGPRFKARPGGYTRILKMGFRVGDNAPMALVELVDRAELAEAPTDEKSED.

This sequence belongs to the bacterial ribosomal protein bL17 family. As to quaternary structure, part of the 50S ribosomal subunit. Contacts protein L32.

The protein is Large ribosomal subunit protein bL17 of Albidiferax ferrireducens (strain ATCC BAA-621 / DSM 15236 / T118) (Rhodoferax ferrireducens).